The following is a 193-amino-acid chain: Proteasome subunit beta 1 (193 aa).

Positions 1–4 (MPGA) are cleaved as a propeptide — removed in mature form; by autocatalysis. Residue T5 is the Nucleophile of the active site.

The protein belongs to the peptidase T1B family. In terms of assembly, the 20S proteasome core is composed of 14 alpha and 14 beta subunits that assemble into four stacked heptameric rings, resulting in a barrel-shaped structure. The two inner rings, each composed of seven catalytic beta subunits, are sandwiched by two outer rings, each composed of seven alpha subunits. The catalytic chamber with the active sites is on the inside of the barrel. Has a gated structure, the ends of the cylinder being occluded by the N-termini of the alpha-subunits. Is capped at one or both ends by the proteasome regulatory ATPase, PAN.

It localises to the cytoplasm. It carries out the reaction Cleavage of peptide bonds with very broad specificity.. With respect to regulation, the formation of the proteasomal ATPase PAN-20S proteasome complex, via the docking of the C-termini of PAN into the intersubunit pockets in the alpha-rings, triggers opening of the gate for substrate entry. Interconversion between the open-gate and close-gate conformations leads to a dynamic regulation of the 20S proteasome proteolysis activity. Functionally, component of the proteasome core, a large protease complex with broad specificity involved in protein degradation. In Cenarchaeum symbiosum (strain A), this protein is Proteasome subunit beta 1.